The chain runs to 492 residues: DEAD-box ATP-dependent RNA helicase RhpA (492 aa).

Positions 20-48 (PSFNDLGLKESVLKSVYEAGFTSPSPIQE) match the Q motif motif. Residues 51–220 (IPAVLQGRDV…DKILENPIKI (170 aa)) form the Helicase ATP-binding domain. An ATP-binding site is contributed by 64 to 71 (AQTGTGKT). Positions 168–171 (DESD) match the DEAD box motif. Residues 231–393 (DITQRFYVIN…EIPTINENQI (163 aa)) form the Helicase C-terminal domain. Residues 445 to 492 (AIQNPKEKTPKPSHKKTPQHERARSFKKGQHRDRHPKTNHHSKKPKRR) are disordered. Over residues 469 to 492 (SFKKGQHRDRHPKTNHHSKKPKRR) the composition is skewed to basic residues.

The protein belongs to the DEAD box helicase family. In terms of assembly, homodimer. Interacts with RNase J (rnj), might be a member of a minimal RNA degradosome complex.

Its subcellular location is the cytoplasm. The catalysed reaction is ATP + H2O = ADP + phosphate + H(+). DEAD-box RNA helicase probably involved in RNA degradation. Unwinds dsRNA in both 5'- and 3'-directions. Background RNA-dependent ATPase activity is stimulated about 5-fold by RNaseJ (rnj). Stimulates the dsRNase activity of RNase J. In Helicobacter pylori (strain B128), this protein is DEAD-box ATP-dependent RNA helicase RhpA (rhpA).